Here is a 195-residue protein sequence, read N- to C-terminus: Ribonuclease HII (195 aa).

In terms of domain architecture, RNase H type-2 spans 6–195; it reads SLIAGVDEVG…KSFISRLKKN (190 aa). A divalent metal cation contacts are provided by aspartate 12, glutamate 13, and aspartate 108.

Belongs to the RNase HII family. Mn(2+) is required as a cofactor. The cofactor is Mg(2+).

It localises to the cytoplasm. It catalyses the reaction Endonucleolytic cleavage to 5'-phosphomonoester.. Its function is as follows. Endonuclease that specifically degrades the RNA of RNA-DNA hybrids. This is Ribonuclease HII from Prochlorococcus marinus (strain NATL2A).